A 525-amino-acid polypeptide reads, in one-letter code: GMP synthase [glutamine-hydrolyzing] (525 aa).

The 199-residue stretch at 8-206 (PLLILDFGSQ…VVDICKASTD (199 aa)) folds into the Glutamine amidotransferase type-1 domain. The active-site Nucleophile is the C85. Active-site residues include H180 and E182. The GMPS ATP-PPase domain maps to 207–400 (WTPEHIIDEA…LGLPHDMVYR (194 aa)). 234 to 240 (SGGVDSS) contributes to the ATP binding site.

As to quaternary structure, homodimer.

It carries out the reaction XMP + L-glutamine + ATP + H2O = GMP + L-glutamate + AMP + diphosphate + 2 H(+). It functions in the pathway purine metabolism; GMP biosynthesis; GMP from XMP (L-Gln route): step 1/1. Catalyzes the synthesis of GMP from XMP. This Legionella pneumophila subsp. pneumophila (strain Philadelphia 1 / ATCC 33152 / DSM 7513) protein is GMP synthase [glutamine-hydrolyzing].